The chain runs to 251 residues: PF03932 family protein CutC (251 aa).

The protein belongs to the CutC family.

It is found in the cytoplasm. The protein is PF03932 family protein CutC of Agrobacterium fabrum (strain C58 / ATCC 33970) (Agrobacterium tumefaciens (strain C58)).